The following is a 364-amino-acid chain: Eukaryotic translation initiation factor 3 subunit H (364 aa).

In terms of domain architecture, MPN spans 13–162; it reads VQVDALVAIK…LRAYRLSPSF (150 aa).

The protein belongs to the eIF-3 subunit H family. In terms of assembly, component of the eukaryotic translation initiation factor 3 (eIF-3) complex.

The protein localises to the cytoplasm. Its function is as follows. Component of the eukaryotic translation initiation factor 3 (eIF-3) complex, which is involved in protein synthesis of a specialized repertoire of mRNAs and, together with other initiation factors, stimulates binding of mRNA and methionyl-tRNAi to the 40S ribosome. The eIF-3 complex specifically targets and initiates translation of a subset of mRNAs involved in cell proliferation. This chain is Eukaryotic translation initiation factor 3 subunit H, found in Phaeosphaeria nodorum (strain SN15 / ATCC MYA-4574 / FGSC 10173) (Glume blotch fungus).